A 952-amino-acid chain; its full sequence is G patch domain-containing protein 1 homolog (952 aa).

6 disordered regions span residues 104–127, 165–233, 320–345, 370–432, 660–711, and 822–952; these read QGIRTRDEFANEDEQKQRSDQRRR, GWKP…DDYE, DKKPKQKKQQHVQQRHVIDGFSEDNS, RSRF…KDHS, PEKV…RNKP, and VAPE…KSKH. Residues 107-123 show a composition bias toward basic and acidic residues; it reads RTRDEFANEDEQKQRSD. The G-patch domain maps to 153 to 199; that stretch reads RDKVAVRILKSMGWKPGQGVGPRQTRKEKRQATARNSKEQYLMEHYG. Residues 214–233 show a composition bias toward acidic residues; sequence DSNNEDEDDEDITFAPDDYE. Residues 323–333 are compositionally biased toward basic residues; sequence PKQKKQQHVQQ. Composition is skewed to basic and acidic residues over residues 375–402, 414–432, and 679–691; these read PMDKERAQKLETASEYKRSGLGRHDLNP, QEEKTAEEQPKRNPFKDHS, and IQDKPNTKEEPSK. Residues 886–896 are compositionally biased toward low complexity; it reads ASSSNESSSSD. Composition is skewed to basic residues over residues 906–934 and 941–952; these read KLSKPKKSHKGSSSKKSKKSKLKSKKKSK and HKAKKKKKKSKH.

It belongs to the GPATCH1 family.

The sequence is that of G patch domain-containing protein 1 homolog from Drosophila melanogaster (Fruit fly).